Here is a 504-residue protein sequence, read N- to C-terminus: ATP synthase subunit alpha, chloroplastic (504 aa).

170–177 (GDRQTGKT) is a binding site for ATP.

It belongs to the ATPase alpha/beta chains family. In terms of assembly, F-type ATPases have 2 components, CF(1) - the catalytic core - and CF(0) - the membrane proton channel. CF(1) has five subunits: alpha(3), beta(3), gamma(1), delta(1), epsilon(1). CF(0) has four main subunits: a, b, b' and c.

Its subcellular location is the plastid. The protein localises to the chloroplast thylakoid membrane. It catalyses the reaction ATP + H2O + 4 H(+)(in) = ADP + phosphate + 5 H(+)(out). Functionally, produces ATP from ADP in the presence of a proton gradient across the membrane. The alpha chain is a regulatory subunit. This Triticum aestivum (Wheat) protein is ATP synthase subunit alpha, chloroplastic.